Here is a 131-residue protein sequence, read N- to C-terminus: D-ribose pyranase (131 aa).

The active-site Proton donor is the histidine 20. Substrate-binding positions include aspartate 28, histidine 98, and 120–122; that span reads YSN.

The protein belongs to the RbsD / FucU family. RbsD subfamily. Homodecamer.

The protein resides in the cytoplasm. The catalysed reaction is beta-D-ribopyranose = beta-D-ribofuranose. It participates in carbohydrate metabolism; D-ribose degradation; D-ribose 5-phosphate from beta-D-ribopyranose: step 1/2. Catalyzes the interconversion of beta-pyran and beta-furan forms of D-ribose. The sequence is that of D-ribose pyranase from Lactiplantibacillus plantarum (strain ATCC BAA-793 / NCIMB 8826 / WCFS1) (Lactobacillus plantarum).